Consider the following 94-residue polypeptide: Small nuclear ribonucleoprotein E (94 aa).

In terms of domain architecture, Sm spans 14 to 94; it reads INCIFNFLQQ…DNITLITSAD (81 aa).

It belongs to the snRNP Sm proteins family. Component of the Sm core complex, present in spliceosomal snRNP U1, U2, U4/U6 and U5. The core complex contains SMB1, SMD1, SMD2, SMD3, SME1, SMX3 and SMX2 (Sm proteins B, D1, D2, D3, E, F and G, respectively), and is probably a heptameric ring structure. SME1 specifically interacts with SMX2 and SMX3. Component of the U4/U6-U5 tri-snRNP complex composed of the U4, U6 and U5 snRNAs and at least PRP3, PRP4, PRP6, PRP8, PRP18, PRP31, PRP38, SNU13, SNU23, SNU66, SNU114, SPP381, SMB1, SMD1, SMD2, SMD3, SMX2, SMX3, LSM2, LSM3, LSM4, LSM5, LSM6, LSM7, LSM8, BRR2 and DIB1.

The protein localises to the cytoplasm. It is found in the nucleus. Functionally, involved in pre-mRNA splicing. Binds and is required for the stability of snRNA U1, U2, U4 and U5 which contain a highly conserved structural motif called the Sm binding site. Involved in cap modification. The polypeptide is Small nuclear ribonucleoprotein E (SME1) (Saccharomyces cerevisiae (strain ATCC 204508 / S288c) (Baker's yeast)).